A 377-amino-acid chain; its full sequence is Testis-expressed protein 13A (377 aa).

The tract at residues 92 to 377 (WLQDLSSLHK…CGKGIWLQNP (286 aa)) is required for repression of transcription. Positions 122–156 (QKEVALQLQMAQAKLEEVQRERDLLRLKILQAELR) form a coiled coil. One copy of the LRR repeat lies at 142 to 165 (ERDLLRLKILQAELRALPNAVRPA). Residues 345–369 (RPGDWDCPWCKAVNFSRRENCFHCG) form a RanBP2-type zinc finger. Residues cysteine 351, cysteine 354, cysteine 365, and cysteine 368 each coordinate Zn(2+).

This sequence belongs to the TEX13 family. In terms of assembly, interacts with CNOT1; the interaction may inhibit CNOT1 binding to mRNA and subsequently CNOT1-mediated mRNA degradation.

Binds to ssRNA containing the consensus sequence 5'-AGGUAA-3'. Plays a role in transcriptional repression. Required for rapid sperm motility and timely degradation of mRNA via its interaction with CNOT1. The polypeptide is Testis-expressed protein 13A (Mus musculus (Mouse)).